Reading from the N-terminus, the 561-residue chain is Oxygen-dependent choline dehydrogenase (561 aa).

6 to 35 is a binding site for FAD; the sequence is DYIIIGAGSAGNVLATRLTEDADVSVLLLE. His475 functions as the Proton acceptor in the catalytic mechanism.

Belongs to the GMC oxidoreductase family. FAD serves as cofactor.

The catalysed reaction is choline + A = betaine aldehyde + AH2. It catalyses the reaction betaine aldehyde + NAD(+) + H2O = glycine betaine + NADH + 2 H(+). It functions in the pathway amine and polyamine biosynthesis; betaine biosynthesis via choline pathway; betaine aldehyde from choline (cytochrome c reductase route): step 1/1. Functionally, involved in the biosynthesis of the osmoprotectant glycine betaine. Catalyzes the oxidation of choline to betaine aldehyde and betaine aldehyde to glycine betaine at the same rate. This chain is Oxygen-dependent choline dehydrogenase, found in Pseudomonas aeruginosa (strain UCBPP-PA14).